The chain runs to 99 residues: MMMNILSNAKLLAHHKGGGSTTNGRNSAGRRLGAKRADGQEVHAGSIIYRQRGTKIHPGKNVGRGGDDTLFALTNGVVKFERLGKYKKQVSVLPVEDAE.

The interval 13–65 (AHHKGGGSTTNGRNSAGRRLGAKRADGQEVHAGSIIYRQRGTKIHPGKNVGRG) is disordered.

It belongs to the bacterial ribosomal protein bL27 family.

The sequence is that of Large ribosomal subunit protein bL27 from Lactobacillus delbrueckii subsp. bulgaricus (strain ATCC BAA-365 / Lb-18).